The following is a 392-amino-acid chain: MVLSNPAMLPPGFRFHPTDEELIVHYLRNRAASSPCPVSIIADVDIYKFDPWDLPSKENYGDREWYFFSPRDRKYPNGIRPNRAAGSGYWKATGTDKPIHSSGGAATNESVGVKKALVFYKGRPPKGTKTNWIMHEYRLAAADAHAANTYRPMKFRNTSMRLDDWVLCRIYKKSSHASPLAVPPLSDHEQDEPCALEENAPLYAPSSSSAASMILQGAAAGAFPSLHAAAAATQRTAMQKIPSISDLLNEYSLSQLFDDGGAAAAAPLQEMARQPDHHHHQQQQHALFGHPVMNHFIANNSMVQLAHLDPSSSAAASTSAGAVVEPPAVTGKRKRSSDGGEPTIQALPPAAAAAKKPNGSCVGATFQIGSALQGSSLGLSHQMLLHSNMGMN.

The NAC domain maps to 9–173; it reads LPPGFRFHPT…DWVLCRIYKK (165 aa). A disordered region spans residues 317-345; the sequence is STSAGAVVEPPAVTGKRKRSSDGGEPTIQ.

As to expression, expressed in leaves, nodes, internodes and mature seeds. Highly expressed in roots. Expressed in leaf sheaths, flag leaves and inflorescences. Expressed in primary and lateral roots, particularly in the vascular tissues. Expressed in the primary phloem of the culm and leaf sheaths. Expressed principally in the primary phloem and in the peripheral zone of the leaf vascular bundles. Expressed in the floral tissues.

It is found in the nucleus. Transcription factor that acts as a positive regulator of the jasmonate (JA) pathway to mediate leaf senescence. May directly regulate LOX2, AOC, AOS2, AOC1 and OPR7, which are genes involved in the biosynthesis of JA. Regulates positively leaf senescence by directly targeting senescence-associated genes (SAGs) related to chlorophyll degradation, nutrient transport and other genes associated with abscisic acid-induced leaf senescence. Transcription activator that plays a role in mediating abiotic stress responses through the abscisic acid (ABA) pathway. Possesses transcriptional activator activity in yeast. This is NAC domain-containing protein 58 from Oryza sativa subsp. japonica (Rice).